Here is a 379-residue protein sequence, read N- to C-terminus: tRNA-specific 2-thiouridylase MnmA (379 aa).

Residues G9–S16 and M35 each bind ATP. Residues N95 to D97 are interaction with target base in tRNA. The active-site Nucleophile is the C100. The cysteines at positions 100 and 198 are disulfide-linked. Residue G124 coordinates ATP. The interval K148–Q150 is interaction with tRNA. C198 serves as the catalytic Cysteine persulfide intermediate. The interval R325–Y326 is interaction with tRNA.

The protein belongs to the MnmA/TRMU family.

It is found in the cytoplasm. It carries out the reaction S-sulfanyl-L-cysteinyl-[protein] + uridine(34) in tRNA + AH2 + ATP = 2-thiouridine(34) in tRNA + L-cysteinyl-[protein] + A + AMP + diphosphate + H(+). Catalyzes the 2-thiolation of uridine at the wobble position (U34) of tRNA, leading to the formation of s(2)U34. The protein is tRNA-specific 2-thiouridylase MnmA of Acidovorax sp. (strain JS42).